A 187-amino-acid polypeptide reads, in one-letter code: 5-hmdU DNA kinase (187 aa).

Belongs to the thymidylate kinase family. 5-hmdU DNA kinase subfamily.

It carries out the reaction 5-hydroxymethyl-dUMP in DNA + ATP = 5-phosphomethyl-dUMP in DNA + ADP + H(+). In terms of biological role, phosphorylates 5-hydroxymethyluracil (5hmdU) into 5-phosphomethyl-2'-deoxyuridine (5-PmdU) on DNA as a step in the pathway leading to thymidine hypermodifications in the viral genome. The phosphate is added internally to the DNA polymer. Also transfers glutamate to 5-pyrophosphoryloxymethyldeoxyuridine (5-PPmdU) to produce 5-Nalpha-glyutamylthymidine (Nalpha-GluT). As a final result of the pathway of hypermodification, 5-aminoethyl-2'-deoxyuridine (5-NedU) substitutes for about 30% of thymidines in the viral DNA. These modifications probably prevent degradation of viral genome by the host restriction-modification antiviral defense system. The chain is 5-hmdU DNA kinase from Pseudomonas phage M6.